A 1710-amino-acid polypeptide reads, in one-letter code: Latrophilin Cirl (1710 aa).

Residues 1-767 lie on the Extracellular side of the membrane; that stretch reads MLPTILSISY…LFTMFDGNMR (767 aa). The 90-residue stretch at 25-114 folds into the SUEL-type lectin domain; that stretch reads ACEGKKLTIE…KYLEAHYQCI (90 aa). The N-linked (GlcNAc...) asparagine glycan is linked to Asn-142. The disordered stretch occupies residues 183 to 304; it reads QHTAVTHSTP…SGSVVPGNGS (122 aa). 2 stretches are compositionally biased toward polar residues: residues 185-198 and 256-265; these read TAVT…STTA and NATSPSNTRI. N-linked (GlcNAc...) asparagine glycosylation occurs at Asn-256. Composition is skewed to low complexity over residues 275–285 and 295–304; these read DDGTLLTTKSS and SGSVVPGNGS. N-linked (GlcNAc...) asparagine glycosylation is found at Asn-302 and Asn-341. The interval 376–400 is disordered; the sequence is YDEYDDDPSSTTPATSSADCLHNSS. Positions 384–394 are enriched in low complexity; the sequence is SSTTPATSSAD. N-linked (GlcNAc...) asparagine glycosylation is found at Asn-398, Asn-655, Asn-703, and Asn-730. Residues 561–754 enclose the GAIN-B domain; that stretch reads RSVVQKVKNI…AILMDVVDEH (194 aa). 2 disulfides stabilise this stretch: Cys-709-Cys-736 and Cys-724-Cys-738. A GPS region spans residues 709-754; it reads CVFWNYIDHAWSANGCSLESTNRTHSVCSCNHLTNFAILMDVVDEH. The chain crosses the membrane as a helical span at residues 768 to 788; that stretch reads IFIYISIGICVVFIVIALLTL. The Cytoplasmic portion of the chain corresponds to 789 to 801; sequence KLFNGVFVKSART. The chain crosses the membrane as a helical span at residues 802–822; the sequence is SIYTSIYLCLLAIELLFLLGI. Residues 823 to 828 lie on the Extracellular side of the membrane; the sequence is EQTETS. Residues 829 to 849 traverse the membrane as a helical segment; sequence IFCGFITIFLHCAILSGTAWF. Residues 850–875 lie on the Cytoplasmic side of the membrane; that stretch reads CYEAFHSYSTLTSDELLLEVDQTPKV. Residues 876 to 896 form a helical membrane-spanning segment; it reads NCYYLLSYGLSLSVVAISLVI. Topologically, residues 897–920 are extracellular; the sequence is DPSTYTQNDYCVLMEANALFYATF. Residues 921 to 941 form a helical membrane-spanning segment; that stretch reads VMPVLVFFVAAIGYTFLSWII. Over 942 to 968 the chain is Cytoplasmic; it reads MCRKSRTGLKTKEHTRLASVRFDIRCS. Residues 969-989 traverse the membrane as a helical segment; that stretch reads FVFLLLLSAVWCSAYFYLRGA. The Extracellular portion of the chain corresponds to 990-999; the sequence is KMDDDTADVY. Residues 1000-1020 form a helical membrane-spanning segment; that stretch reads GYCFICFNTLLGLYIFVFHCI. Residues 1021-1710 lie on the Cytoplasmic side of the membrane; the sequence is QNEKIRREYR…VRCYLEPLAK (690 aa). Phosphoserine is present on residues Ser-1156, Ser-1253, Ser-1260, Ser-1329, and Ser-1330. Residues 1234-1259 are disordered; that stretch reads KPNSGQHGKKKRGAGGVPASPSGSLH. Disordered regions lie at residues 1452–1540 and 1568–1690; these read GGGS…SDER and DYGA…QQRH. The span at 1458–1483 shows a compositional bias: low complexity; the sequence is GGSVSSRSQQQQLKKQQQQQSLAQQR. Composition is skewed to acidic residues over residues 1491-1505 and 1515-1528; these read DDDD…EEAT and CDED…DLED. Positions 1638–1650 are enriched in polar residues; it reads QTPAQKRQQLQKL. Residues 1651-1672 are compositionally biased toward low complexity; it reads SPQSTTSSSSHTSHSNPNPHPH. Residues 1673–1689 are compositionally biased toward basic residues; it reads QLTHPHPHQHPPHHQQR.

Belongs to the G-protein coupled receptor 2 family. LN-TM7 subfamily. As to quaternary structure, forms a heterodimer, consisting of a large extracellular region non-covalently linked to a seven-transmembrane moiety. Post-translationally, proteolytically cleaved into 2 subunits, an extracellular subunit and a seven-transmembrane subunit.

The protein localises to the cell membrane. In Drosophila erecta (Fruit fly), this protein is Latrophilin Cirl.